A 1347-amino-acid polypeptide reads, in one-letter code: Protocadherin-11 X-linked (1347 aa).

Residues methionine 1–alanine 23 form the signal peptide. Residues glutamine 24–lysine 812 lie on the Extracellular side of the membrane. Cadherin domains are found at residues lysine 26 to phenylalanine 139, proline 140 to phenylalanine 249, lysine 250 to isoleucine 355, asparagine 362 to phenylalanine 466, threonine 467 to phenylalanine 570, threonine 571 to phenylalanine 673, and proline 677 to threonine 795. Asparagine 27, asparagine 48, and asparagine 54 each carry an N-linked (GlcNAc...) asparagine glycan. An N-linked (GlcNAc...) asparagine glycan is attached at asparagine 344. The N-linked (GlcNAc...) asparagine glycan is linked to asparagine 553. Asparagine 773 carries N-linked (GlcNAc...) asparagine glycosylation. The chain crosses the membrane as a helical span at residues isoleucine 813 to valine 833. The Cytoplasmic portion of the chain corresponds to valine 834–leucine 1347. Disordered regions lie at residues isoleucine 1031–glutamine 1050, leucine 1057–glutamine 1091, arginine 1097–phenylalanine 1116, and threonine 1325–leucine 1347.

The protein resides in the cell membrane. Potential calcium-dependent cell-adhesion protein. This chain is Protocadherin-11 X-linked (PCDH11X), found in Pongo pygmaeus (Bornean orangutan).